Here is a 619-residue protein sequence, read N- to C-terminus: Eukaryotic translation initiation factor 3 subunit D (619 aa).

The disordered stretch occupies residues 99–160 (QKQPHQRGRF…KWGARPPPKI (62 aa)). A compositionally biased stretch (basic residues) spans 100–121 (KQPHQRGRFRGNLRNQRGRGRG). The segment at 288-302 (EFDLLTVNETAIEPP) is RNA gate. Positions 588-619 (TPAATETVATATTEATTPTTATKTTAPAAAQK) are disordered.

It belongs to the eIF-3 subunit D family. Component of the eukaryotic translation initiation factor 3 (eIF-3) complex.

It localises to the cytoplasm. In terms of biological role, mRNA cap-binding component of the eukaryotic translation initiation factor 3 (eIF-3) complex, which is involved in protein synthesis of a specialized repertoire of mRNAs and, together with other initiation factors, stimulates binding of mRNA and methionyl-tRNAi to the 40S ribosome. The eIF-3 complex specifically targets and initiates translation of a subset of mRNAs involved in cell proliferation. In the eIF-3 complex, eif3d specifically recognizes and binds the 7-methylguanosine cap of a subset of mRNAs. The sequence is that of Eukaryotic translation initiation factor 3 subunit D from Aedes aegypti (Yellowfever mosquito).